The following is a 218-amino-acid chain: uncharacterized protein (218 aa).

Positions 111–193 (NSIYLVEGDF…ITKVIEIKAA (83 aa)) constitute a Toprim domain.

This is an uncharacterized protein from Mycoplasma genitalium (strain ATCC 33530 / DSM 19775 / NCTC 10195 / G37) (Mycoplasmoides genitalium).